The sequence spans 217 residues: Large ribosomal subunit protein uL4 (217 aa).

The tract at residues 46 to 102 is disordered; the sequence is KRQGTHSAKTRAEVSGGGRKPFRQKGTGRARQGSIRAPHFTGGGISHGPKPRDYSQR.

It belongs to the universal ribosomal protein uL4 family. As to quaternary structure, part of the 50S ribosomal subunit.

Functionally, one of the primary rRNA binding proteins, this protein initially binds near the 5'-end of the 23S rRNA. It is important during the early stages of 50S assembly. It makes multiple contacts with different domains of the 23S rRNA in the assembled 50S subunit and ribosome. Forms part of the polypeptide exit tunnel. This is Large ribosomal subunit protein uL4 from Corynebacterium diphtheriae (strain ATCC 700971 / NCTC 13129 / Biotype gravis).